Here is a 277-residue protein sequence, read N- to C-terminus: Pristinamycin IIA synthase subunit B (277 aa).

As to quaternary structure, heterodimer of two subunits, SnaA and SnaB. FMN serves as cofactor.

Catalyzes the oxidation of the proline residue of pristinamycin IIB (PIIB) to pristinamycin IIA (PIIA). The chain is Pristinamycin IIA synthase subunit B (snaB) from Streptomyces pristinaespiralis.